The following is a 1045-amino-acid chain: Pre-mRNA-splicing factor ATP-dependent RNA helicase DHX16 (1045 aa).

Residues 101-211 (EDSEESSEEA…ERSDKKAYEE (111 aa)) form a disordered region. Phosphoserine is present on residues Ser-103, Ser-106, and Ser-107. Residues 119–131 (QKKRKKRKHLRKK) are compositionally biased toward basic residues. Residues 135–144 (EEEEEEEEEV) are compositionally biased toward acidic residues. Residue Ser-164 is modified to Phosphoserine. A compositionally biased stretch (basic and acidic residues) spans 170–211 (RTERERLQDLEERDAFAERVRQRDKDRTRNVLERSDKKAYEE). A Helicase ATP-binding domain is found at 413-577 (LAAVANHQIL…FDDAPVFRIP (165 aa)). Residue 426–433 (GETGSGKT) participates in ATP binding. The DEAH box motif lies at 524–527 (DEAH). A Helicase C-terminal domain is found at 602 to 775 (SVLQIHVTQP…NVVLLLKSLG (174 aa)). A Phosphothreonine modification is found at Thr-716. The tract at residues 1026-1045 (EDPHAKKMPKKTGKTREELG) is disordered.

This sequence belongs to the DEAD box helicase family. DEAH subfamily. DDX16/PRP8 sub-subfamily. As to quaternary structure, component of pre-catalytic spliceosome complexes. Component of the minor spliceosome, which splices U12-type introns. Interacts with GPKOW. Interacts with TRIM6. Interacts with RIGI.

It localises to the nucleus. It is found in the nucleoplasm. The protein localises to the cytoplasm. It carries out the reaction ATP + H2O = ADP + phosphate + H(+). Its function is as follows. Required for pre-mRNA splicing as a component of the spliceosome. Contributes to pre-mRNA splicing after spliceosome formation and prior to the first transesterification reaction. As a component of the minor spliceosome, involved in the splicing of U12-type introns in pre-mRNAs. Also plays a role in innate antiviral response by acting as a pattern recognition receptor sensing splicing signals in viral RNA. Mechanistically, TRIM6 promotes the interaction between unanchored 'Lys-48'-polyubiquitin chains and DHX16, leading to DHX16 interaction with RIGI and ssRNA to amplify RIGI-dependent innate antiviral immune responses. This chain is Pre-mRNA-splicing factor ATP-dependent RNA helicase DHX16 (DHX16), found in Sus scrofa (Pig).